A 575-amino-acid chain; its full sequence is MAQISESAAIPRRTANHHGNVWDDDLILSLDSPYGAPAYYERLAKLIEEMKHLLLREMEDSNHDLIRRLQIVDTLECLGIDRHFQHEIKTAALHYVYRCWNEKGIGMGSSDSGSKDLDATALGLRALRLHRYNVSSGVLENFQDENGKFFCNLTGDKRVRSMLSLLRASEISFPGEKVMQEAKAFTREYLTQVLAGSGDVTDVDQSLLREVKYALEFPWYCSAPRWEAKSFIEIYGQNQSWLKSNINQEVLELAKLDFSILQCIHQKEIQCITRWWRDSEIAQLNFYRRRHVELYFWAVTCIFEPEFSPSRIAFAKITTVGAVLDDLYDTHGTLDELKTITEAVRRWDLSLIDDLPNNIKIACQFFFNTANELAVEVVKKQGRDMTALLKATWQRYVESYLQEAEWIETRHVPSFNEYIKNALVSSGMCIVNLIPLLLLGQLLANNIVEQILSPSKIQELSELTIRLIDDIRDFEDEKERGEIASIVECYMKDNPDSTLENALNHIKGILHVSLEELNWEFMKDDSVPLCCKKFTFNIVRGLQFLYKYGDGISISNKEVKDQIFKILVDQIPIED.

Residues Asp325, Asp329, Asp469, and Glu477 each coordinate Mg(2+). The DDXXD motif signature appears at 325–329 (DDLYD).

This sequence belongs to the terpene synthase family. Tpsa subfamily. It depends on Mg(2+) as a cofactor. Mn(2+) is required as a cofactor.

The enzyme catalyses (2E,6E)-farnesyl diphosphate = alpha-humulene + diphosphate. The protein operates within sesquiterpene biosynthesis. It participates in terpene metabolism; oleoresin biosynthesis. In terms of biological role, terpene synthase (TPS) involved in the biosynthesis of sesquiterpene natural products included in conifer oleoresin secretions and volatile emissions; these compounds contribute to biotic and abiotic stress defense against herbivores and pathogens. Catalyzes the conversion of (2E,6E)-farnesyl diphosphate (FPP) to (1E,4E,8E)-alpha-humulene. In Picea glauca (White spruce), this protein is Alpha-humulene synthase.